The primary structure comprises 500 residues: L-arabinose isomerase (500 aa).

Mn(2+) is bound by residues E306, E333, H349, and H448.

The protein belongs to the arabinose isomerase family. The cofactor is Mn(2+).

It carries out the reaction beta-L-arabinopyranose = L-ribulose. It functions in the pathway carbohydrate degradation; L-arabinose degradation via L-ribulose; D-xylulose 5-phosphate from L-arabinose (bacterial route): step 1/3. Its function is as follows. Catalyzes the conversion of L-arabinose to L-ribulose. This chain is L-arabinose isomerase, found in Shewanella baltica (strain OS223).